The following is a 484-amino-acid chain: Glycogen synthase (484 aa).

An ADP-alpha-D-glucose-binding site is contributed by Lys18.

Belongs to the glycosyltransferase 1 family. Bacterial/plant glycogen synthase subfamily.

It carries out the reaction [(1-&gt;4)-alpha-D-glucosyl](n) + ADP-alpha-D-glucose = [(1-&gt;4)-alpha-D-glucosyl](n+1) + ADP + H(+). The protein operates within glycan biosynthesis; glycogen biosynthesis. Its function is as follows. Synthesizes alpha-1,4-glucan chains using ADP-glucose. The polypeptide is Glycogen synthase (Vibrio cholerae serotype O1 (strain ATCC 39541 / Classical Ogawa 395 / O395)).